A 28-amino-acid polypeptide reads, in one-letter code: Apolipoprotein C-I (28 aa).

It belongs to the apolipoprotein C1 family.

It is found in the secreted. Functionally, inhibitor of lipoprotein binding to the low density lipoprotein (LDL) receptor, LDL receptor-related protein, and very low density lipoprotein (VLDL) receptor. Associates with high density lipoproteins (HDL) and the triacylglycerol-rich lipoproteins in the plasma and makes up about 10% of the protein of the VLDL and 2% of that of HDL. Appears to interfere directly with fatty acid uptake and is also the major plasma inhibitor of cholesteryl ester transfer protein (CETP). Binds free fatty acids and reduces their intracellular esterification. Modulates the interaction of APOE with beta-migrating VLDL and inhibits binding of beta-VLDL to the LDL receptor-related protein. This chain is Apolipoprotein C-I (APOC1), found in Oryctolagus cuniculus (Rabbit).